The following is a 290-amino-acid chain: 4-hydroxybenzoate octaprenyltransferase (290 aa).

Helical transmembrane passes span 41-61 (WPLV…GCAM), 89-109 (WEAV…ILPL), 133-153 (FFAI…PMAF), 158-178 (GTVP…SVAY), 202-224 (FGRF…YAWI), and 269-289 (WLGG…GAAG).

This sequence belongs to the UbiA prenyltransferase family. It depends on Mg(2+) as a cofactor.

Its subcellular location is the cell inner membrane. The enzyme catalyses all-trans-octaprenyl diphosphate + 4-hydroxybenzoate = 4-hydroxy-3-(all-trans-octaprenyl)benzoate + diphosphate. It functions in the pathway cofactor biosynthesis; ubiquinone biosynthesis. Functionally, catalyzes the prenylation of para-hydroxybenzoate (PHB) with an all-trans polyprenyl group. Mediates the second step in the final reaction sequence of ubiquinone-8 (UQ-8) biosynthesis, which is the condensation of the polyisoprenoid side chain with PHB, generating the first membrane-bound Q intermediate 3-octaprenyl-4-hydroxybenzoate. The chain is 4-hydroxybenzoate octaprenyltransferase from Burkholderia vietnamiensis (strain G4 / LMG 22486) (Burkholderia cepacia (strain R1808)).